Here is a 419-residue protein sequence, read N- to C-terminus: Prolyl hydroxylase EGLN2 (419 aa).

Low complexity-rich tracts occupy residues 1–18 and 64–73; these read MDSP…PQLP and TTATATTTTA. Disordered regions lie at residues 1-89 and 108-181; these read MDSP…GELW and AAQG…REEV. The Bipartite nuclear localization signal motif lies at 89-134; it reads WPLQSEGAAALVTKECQRLAAQGARPEAPKRKWAKDGGDAPSPSKR. Positions 115–126 are enriched in basic and acidic residues; the sequence is EAPKRKWAKDGG. Ser130 is subject to Phosphoserine. Positions 154–174 are enriched in low complexity; the sequence is SGASNSSSSSSNTTSSSGEAS. Positions 237–247 are beta(2)beta(3) 'finger-like' loop; sequence VSQRAIPPRSI. The region spanning 290–388 is the Fe2OG dioxygenase domain; sequence GRTKAMVACY…RYAITVWYFD (99 aa). The Fe cation site is built by His309, Asp311, and His370. Arg379 lines the 2-oxoglutarate pocket.

Interacts with E3 ligase SIAH2. Interacts with LIMD1, WTIP and AJUBA. It depends on Fe(2+) as a cofactor. L-ascorbate is required as a cofactor. In terms of processing, ubiquitinated by SIAH1 and/or SIAH2 in response to the unfolded protein response (UPR), leading to its degradation. In terms of tissue distribution, highly expressed in testis, expression was also detected in the heart brain, liver kidney and lung. Expression was lowest in spleen and skeletal muscle. Constitutively expressed during differentiation of C2C12 skeletal myocytes.

It is found in the nucleus. It catalyses the reaction L-prolyl-[protein] + 2-oxoglutarate + O2 = trans-4-hydroxy-L-prolyl-[protein] + succinate + CO2. The catalysed reaction is L-prolyl-[hypoxia-inducible factor alpha subunit] + 2-oxoglutarate + O2 = trans-4-hydroxy-L-prolyl-[hypoxia-inducible factor alpha subunit] + succinate + CO2. In terms of biological role, prolyl hydroxylase that mediates hydroxylation of proline residues in target proteins, such as ATF4, IKBKB, CEP192 and HIF1A. Target proteins are preferentially recognized via a LXXLAP motif. Cellular oxygen sensor that catalyzes, under normoxic conditions, the post-translational formation of 4-hydroxyproline in hypoxia-inducible factor (HIF) alpha proteins. Hydroxylates a specific proline found in each of the oxygen-dependent degradation (ODD) domains (N-terminal, NODD, and C-terminal, CODD) of HIF1A. Also hydroxylates HIF2A. Has a preference for the CODD site for both HIF1A and HIF2A. Hydroxylated HIFs are then targeted for proteasomal degradation via the von Hippel-Lindau ubiquitination complex. Under hypoxic conditions, the hydroxylation reaction is attenuated allowing HIFs to escape degradation resulting in their translocation to the nucleus, heterodimerization with HIF1B, and increased expression of hypoxy-inducible genes. EGLN2 is involved in regulating hypoxia tolerance and apoptosis in cardiac and skeletal muscle. Also regulates susceptibility to normoxic oxidative neuronal death. Links oxygen sensing to cell cycle and primary cilia formation by hydroxylating the critical centrosome component CEP192 which promotes its ubiquitination and subsequent proteasomal degradation. Hydroxylates IKBKB, mediating NF-kappa-B activation in hypoxic conditions. Also mediates hydroxylation of ATF4, leading to decreased protein stability of ATF4. The sequence is that of Prolyl hydroxylase EGLN2 from Mus musculus (Mouse).